The chain runs to 1732 residues: Polycystin-1-like protein 3 (1732 aa).

An N-terminal signal peptide occupies residues 1–23 (MFFKGGSWLWLYIRTSIILGSEL). Residues 24–697 (NSPAPHGQNN…IKLFLRVTNN (674 aa)) are Extracellular-facing. The C-type lectin domain occupies 30–138 (GQNNCYQLNR…CLLKYYFICQ (109 aa)). 2 disulfide bridges follow: Cys51–Cys137 and Cys112–Cys129. 5 N-linked (GlcNAc...) asparagine glycosylation sites follow: Asn286, Asn363, Asn515, Asn537, and Asn575. A GAIN-B domain is found at 523–685 (TSLNMSTHQL…FVVPRTVNVE (163 aa)). Cystine bridges form between Cys635/Cys663 and Cys650/Cys665. Residues 635–685 (CYYWEIHNQTWSSAGCQVGPQSTILRTQCLCNHLTFFASDFFVVPRTVNVE) are GPS. Residues 698-718 (PVGVSLLASLLGFYVITVVWA) form a helical membrane-spanning segment. Residues 719-905 (RKKDQADMQK…PWNQFTRVQR (187 aa)) are Cytoplasmic-facing. Residues 743–860 (FHYLIQVYTG…GDCELDRVFI (118 aa)) enclose the PLAT domain. The chain crosses the membrane as a helical span at residues 906 to 926 (LSCCMTLLLCNMVINVMFWKI). Over 927 to 939 (NSTTAKRDEQMRP) the chain is Extracellular. The helical transmembrane segment at 940-960 (FAVAWSELLVSIHTAVILFPI) threads the bilayer. At 961-1154 (NLVIGRLFPL…ISNGLSKWLT (194 aa)) the chain is on the cytoplasmic side. Residues 1155 to 1175 (SVCWLLLGFTSLASAFFTALY) traverse the membrane as a helical segment. Over 1176–1198 (SLELSKDQATSWMISIILSVLQN) the chain is Extracellular. The chain crosses the membrane as a helical span at residues 1199–1219 (IFISQPVKVVFFTFLYSLMMS). The Cytoplasmic segment spans residues 1220 to 1289 (RMPRLNKENE…KLTGDILVQI (70 aa)). The chain crosses the membrane as a helical span at residues 1290–1300 (LFLTLLMTAIY). Over 1301–1461 (SAKNSNRFYL…SFTSLQMSKK (161 aa)) the chain is Extracellular. The chain crosses the membrane as a helical span at residues 1462–1491 (GCVWSIISQVIYYLLVCYYAFIQGCQLKQQ). At 1492 to 1500 (KWRFFTGKR) the chain is on the cytoplasmic side. A helical transmembrane segment spans residues 1501 to 1519 (NILDTSIILISFILLGLDM). The Extracellular segment spans residues 1520-1550 (KSISLHKKNMARYRDDQDRFISFYEAVKVNS). Residues 1551–1572 (AATHLVGFPVLLATVQLWNLLR) traverse the membrane as a helical segment. At 1573–1589 (HSPRLRVISRTLSRAWD) the chain is on the cytoplasmic side. Residues 1590–1614 (EVVGFLLIILILLTGYAIAFNLLFG) traverse the membrane as a helical segment. The interval 1613–1651 (FGCSISDYRTFFSSAVTVVGLLMGISHQEEVFALDPVLG) is channel pore-region. Topologically, residues 1615 to 1647 (CSISDYRTFFSSAVTVVGLLMGISHQEEVFALD) are extracellular. The chain crosses the membrane as a helical span at residues 1648–1667 (PVLGTFLILTSVILMVLVVI). The Cytoplasmic segment spans residues 1668-1732 (NLFVSAILMA…SDTEVLDELP (65 aa)).

This sequence belongs to the polycystin family. Heterotetramer with PKD2L1, composed of 3 subunit of PKD2L1 and 1 subunit of PKD1L3. Autoproteolytically processed at the GPS region of the GAIN-B domain; this cleavage modulates receptor activity. Highly expressed in placenta, weakly in heart and lung.

It localises to the cell membrane. It catalyses the reaction Ca(2+)(in) = Ca(2+)(out). The enzyme catalyses Na(+)(in) = Na(+)(out). It carries out the reaction K(+)(in) = K(+)(out). The catalysed reaction is Mg(2+)(in) = Mg(2+)(out). Its activity is regulated as follows. The non-selective cation channel is gated following an off-response property by acid: gated open after the removal of acid stimulus, but not during acid application. Regulation of non-selective cation channel activity by external Ca(2+) is bimodal, first sensitizing and subsequently inactivating the current. In terms of biological role, pore-forming subunit of a heterotetrameric, non-selective cation channel that is permeable to Ca(2+). Also shows permeability towards NA(1+), K(+) and Mg(2+). Heterotetrameric complex channel is activated by external low pH and Ca(2+), but opens only when the extracellular pH rises again and after the removal of acid stimulus. May act as a sour taste receptor in gustatory cells; however, its contribution to sour taste perception is unclear in vivo and may be indirect. This Homo sapiens (Human) protein is Polycystin-1-like protein 3.